We begin with the raw amino-acid sequence, 499 residues long: Signal recognition particle subunit SRP54 2 (499 aa).

Positions 1–295 (MVLAELGGSI…DVKPFVSRLL (295 aa)) are G-domain. Residues 108–115 (GLQGSGKT), 190–194 (DTSGR), and 248–251 (TKMD) each bind GTP. The tract at residues 296–499 (GMGDWSGFMD…MGGMFGGGDK (204 aa)) is M-domain.

It belongs to the GTP-binding SRP family. SRP54 subfamily. In terms of assembly, component of a signal recognition particle (SRP) complex that consists of a 7SL RNA molecule of 300 nucleotides and six protein subunits: SRP72, SRP68, SRP54, SRP19, SRP14 and SRP9.

The protein localises to the cytoplasm. The protein resides in the endoplasmic reticulum. It catalyses the reaction GTP + H2O = GDP + phosphate + H(+). Component of the signal recognition particle (SRP) complex, a ribonucleoprotein complex that mediates the cotranslational targeting of secretory and membrane proteins to the endoplasmic reticulum (ER). As part of the SRP complex, associates with the SRP receptor (SR) component SRPRA to target secretory proteins to the endoplasmic reticulum membrane. Binds to the signal sequence of presecretory proteins when they emerge from the ribosomes. Displays basal GTPase activity, and stimulates reciprocal GTPase activation of the SR subunit SRPRA. Forms a guanosine 5'-triphosphate (GTP)-dependent complex with the SR subunit SRPRA. SR compaction and GTPase mediated rearrangement of SR drive SRP-mediated cotranslational protein translocation into the ER. Requires the presence of SRP9/SRP14 and/or SRP19 to stably interact with RNA. The chain is Signal recognition particle subunit SRP54 2 from Solanum lycopersicum (Tomato).